The primary structure comprises 309 residues: Ankyrin repeat protein VACWR203 (309 aa).

5 ANK repeats span residues 13–44 (SVFKGFSDKVRKNDLDMNVVKELLSNGASLTI), 110–142 (KYGTPLHILASNKKLITPNYMKLLVYNGNDINA), 160–189 (FVYHNIEYGIRYYNEKIIDAFIELGADLTI), 197–231 (PVVYCIHSNAEYGYNNITNIKIIRKLLNLSRRASH), and 269–298 (EGRTPLHCAIQHNFTQIAKYLLDRGADIVV).

Belongs to the orthopoxviruses VACWR203 protein family.

This is Ankyrin repeat protein VACWR203 from Bos taurus (Bovine).